The sequence spans 304 residues: Porphobilinogen deaminase (304 aa).

Cys-240 carries the post-translational modification S-(dipyrrolylmethanemethyl)cysteine.

Belongs to the HMBS family. Monomer. Dipyrromethane serves as cofactor.

The catalysed reaction is 4 porphobilinogen + H2O = hydroxymethylbilane + 4 NH4(+). Its pathway is porphyrin-containing compound metabolism; protoporphyrin-IX biosynthesis; coproporphyrinogen-III from 5-aminolevulinate: step 2/4. Functionally, tetrapolymerization of the monopyrrole PBG into the hydroxymethylbilane pre-uroporphyrinogen in several discrete steps. The sequence is that of Porphobilinogen deaminase from Xanthomonas euvesicatoria pv. vesicatoria (strain 85-10) (Xanthomonas campestris pv. vesicatoria).